Reading from the N-terminus, the 914-residue chain is Translation initiation factor IF-2 (914 aa).

Residues Lys58–Pro160 are disordered. Residues Lys70–Ala91 show a composition bias toward basic and acidic residues. A compositionally biased stretch (basic residues) spans Ala92–Ala103. Residues Pro104–Pro160 show a composition bias toward basic and acidic residues. The region spanning Glu413–Lys582 is the tr-type G domain. The interval Gly422–Thr429 is G1. Gly422–Thr429 contributes to the GTP binding site. Residues Gly447–His451 are G2. The G3 stretch occupies residues Asp468–Gly471. GTP-binding positions include Asp468–His472 and Asn522–Asp525. Residues Asn522 to Asp525 are G4. Positions Ser558–Lys560 are G5.

It belongs to the TRAFAC class translation factor GTPase superfamily. Classic translation factor GTPase family. IF-2 subfamily.

It is found in the cytoplasm. Functionally, one of the essential components for the initiation of protein synthesis. Protects formylmethionyl-tRNA from spontaneous hydrolysis and promotes its binding to the 30S ribosomal subunits. Also involved in the hydrolysis of GTP during the formation of the 70S ribosomal complex. The polypeptide is Translation initiation factor IF-2 (Campylobacter hominis (strain ATCC BAA-381 / DSM 21671 / CCUG 45161 / LMG 19568 / NCTC 13146 / CH001A)).